A 215-amino-acid chain; its full sequence is Leucyl/phenylalanyl-tRNA--protein transferase (215 aa).

Belongs to the L/F-transferase family.

Its subcellular location is the cytoplasm. It carries out the reaction N-terminal L-lysyl-[protein] + L-leucyl-tRNA(Leu) = N-terminal L-leucyl-L-lysyl-[protein] + tRNA(Leu) + H(+). The enzyme catalyses N-terminal L-arginyl-[protein] + L-leucyl-tRNA(Leu) = N-terminal L-leucyl-L-arginyl-[protein] + tRNA(Leu) + H(+). It catalyses the reaction L-phenylalanyl-tRNA(Phe) + an N-terminal L-alpha-aminoacyl-[protein] = an N-terminal L-phenylalanyl-L-alpha-aminoacyl-[protein] + tRNA(Phe). Its function is as follows. Functions in the N-end rule pathway of protein degradation where it conjugates Leu, Phe and, less efficiently, Met from aminoacyl-tRNAs to the N-termini of proteins containing an N-terminal arginine or lysine. In Campylobacter jejuni subsp. doylei (strain ATCC BAA-1458 / RM4099 / 269.97), this protein is Leucyl/phenylalanyl-tRNA--protein transferase.